We begin with the raw amino-acid sequence, 241 residues long: Transmembrane protein 176A (241 aa).

Serine 38 is subject to Phosphoserine. A run of 4 helical transmembrane segments spans residues 65-85, 93-113, 127-147, and 193-213; these read WVMQ…LYIF, SGAP…AFIY, LLAL…AGRF, and LFIS…LASL.

Belongs to the TMEM176 family. As to quaternary structure, interacts with MCOLN2.

It is found in the membrane. The sequence is that of Transmembrane protein 176A (TMEM176A) from Bos taurus (Bovine).